Here is a 474-residue protein sequence, read N- to C-terminus: Protein FAM161A (474 aa).

Disordered stretches follow at residues 78–126, 185–210, and 308–364; these read SSSS…PGEI, QKRR…DDAE, and REEL…DQGL. Residues 188–250 adopt a coiled-coil conformation; sequence REKASDAQET…KKTRERSKAA (63 aa). The interval 274 to 454 is required for interaction with CFAP418; it reads KLRELCRAKK…PTASSRGREQ (181 aa). Over residues 325–335 the composition is skewed to polar residues; the sequence is LQSSPWPSHST. Residues Lys-397 and Lys-413 each participate in a glycyl lysine isopeptide (Lys-Gly) (interchain with G-Cter in SUMO2) cross-link. The interval 412-474 is disordered; it reads LKETRRPNPS…KELARIGGAR (63 aa). Over residues 422-431 the composition is skewed to basic residues; the sequence is PRHKSPRRSA. The segment covering 450–468 has biased composition (basic and acidic residues); it reads RGREQAIRRSEKARMKELA.

This sequence belongs to the FAM161 family. In terms of assembly, interacts (via central region) with CFAP418 (via N-terminus); the interaction is direct. Interacts (via C-terminus) with microtubules. Interacts with LCA5. Interacts with CEP290. Interacts with SDCCAG8. Interacts with FAM161B. Interacts with POC1B. Interacts with CEP78. Forms a microtubule-associated complex with POC5, CETN2 and POC1B. Interacts with CCDC15. As to expression, expressed in the retina and kidney.

The protein localises to the cytoplasm. Its subcellular location is the cytoskeleton. The protein resides in the cilium basal body. It localises to the cell projection. It is found in the cilium. The protein localises to the microtubule organizing center. Its subcellular location is the centrosome. The protein resides in the centriole. Functionally, involved in ciliogenesis. This chain is Protein FAM161A, found in Rattus norvegicus (Rat).